The chain runs to 357 residues: Mannonate dehydratase (357 aa).

This sequence belongs to the mannonate dehydratase family. Fe(2+) serves as cofactor. The cofactor is Mn(2+).

The catalysed reaction is D-mannonate = 2-dehydro-3-deoxy-D-gluconate + H2O. Its pathway is carbohydrate metabolism; pentose and glucuronate interconversion. Its function is as follows. Catalyzes the dehydration of D-mannonate. This is Mannonate dehydratase from Sorangium cellulosum (strain So ce56) (Polyangium cellulosum (strain So ce56)).